Here is a 438-residue protein sequence, read N- to C-terminus: Argininosuccinate lyase (438 aa).

Belongs to the lyase 1 family. Argininosuccinate lyase subfamily.

The protein resides in the cytoplasm. The catalysed reaction is 2-(N(omega)-L-arginino)succinate = fumarate + L-arginine. Its pathway is amino-acid biosynthesis; L-arginine biosynthesis; L-arginine from L-ornithine and carbamoyl phosphate: step 3/3. This chain is Argininosuccinate lyase, found in Clostridium tetani (strain Massachusetts / E88).